Reading from the N-terminus, the 171-residue chain is MHPFYTRAATMIGEIAAAVSFISKFLRTKGLTSERQLQTFSQSLQELLAEHYKHHWFPEKPCKGSGYRCIRINHKMDPLIGQAAQRIGLSSQELFRLLPSELTLWVDPYEVSYRIGEDGSICVLYEASPAGGSSQNSTNVQMVDSRISCKEELLLGRTSPSKNYNMMTVSG.

Serine 159 carries the phosphoserine modification.

This sequence belongs to the BTG family. Interacts with CNOT7 and CNOT8.

Functionally, anti-proliferative protein. This is Protein BTG1 (Btg1) from Rattus norvegicus (Rat).